The following is a 781-amino-acid chain: Zinc finger protein klf1 (781 aa).

2 C2H2-type zinc fingers span residues 17 to 41 (YKCD…FRSH) and 47 to 70 (FICP…NQKH).

Its subcellular location is the nucleus. It is found in the cytoplasm. The protein localises to the cytoskeleton. The protein resides in the spindle. Required for maintaining cell viability in nitrogen-deficient stationary phase (G0) cells. The chain is Zinc finger protein klf1 (klf1) from Schizosaccharomyces pombe (strain 972 / ATCC 24843) (Fission yeast).